An 867-amino-acid chain; its full sequence is Dynamin-1 (867 aa).

One can recognise a Dynamin-type G domain in the interval 28-294 (DLDLPQIAVV…LTNHIRDTLP (267 aa)). The interval 38 to 45 (GGQSAGKS) is G1 motif. Residues Ser-41, Gly-43, Lys-44, Ser-45, Ser-46, Arg-59, and Gly-60 each coordinate GDP. Residues 64 to 66 (VTR) form a G2 motif region. Position 80 is a phosphotyrosine (Tyr-80). 3'-nitrotyrosine; alternate is present on Tyr-125. Position 125 is a phosphotyrosine; alternate (Tyr-125). The G3 motif stretch occupies residues 136-139 (DLPG). The G4 motif stretch occupies residues 205 to 208 (TKLD). Positions 206, 208, 211, 236, 237, and 239 each coordinate GDP. The segment at 235–238 (VNRS) is G5 motif. 2 positions are modified to phosphoserine: Ser-306 and Ser-347. Tyr-354 carries the phosphotyrosine modification. Ser-512 carries the post-translational modification Phosphoserine. The PH domain occupies 515–625 (QDEILVIRKG…WKASFLRAGV (111 aa)). In terms of domain architecture, GED spans 659–750 (VETIRNLVDS…IIGDINTTTV (92 aa)). The tract at residues 767–867 (SVPAGRRSPT…HENRAGKARL (101 aa)) is disordered. Residues Ser-774 and Ser-778 each carry the phosphoserine modification. Arg-796 bears the Omega-N-methylarginine mark. Ser-822 is modified (phosphoserine). Residues 825-843 (PFGPPPQVPSRPNRAPPGV) show a composition bias toward pro residues. Gly-847, Leu-851, and Lys-857 each carry phosphoserine. The span at 856–867 (GKHENRAGKARL) shows a compositional bias: basic and acidic residues.

Belongs to the TRAFAC class dynamin-like GTPase superfamily. Dynamin/Fzo/YdjA family. As to quaternary structure, homodimer; homodimerization is mediated by the dynamin-type G domain which promotes assembly-stimulated GTPase activity. Homo-tetramer formed from two dimers in the absence of lipid. Oligomerizes into a helical polymer that self-assembles around the vesicle membrane, when associated to the menbrane through lipid binding. Interacts (via C-terminal proline-rich domain (PRD)) with SNX9 (via SH3 domain); this interaction allows regulation of DNM1 self-assembly during late stages of endocytic vesicle formation and supports DNM1's early functions in accelerating clathrin-coated pits (CCPs) maturation in non neuronals cell. Interacts (via C-terminal proline-rich domain (PRD)) with MYO1E (via SH3 domain); this interaction regulates receptor-mediated endocytosis. Interacts with SNX33 (via SH3 domain); this interaction decreases DNM1-dependent endocytosis. Interacts with DIAPH1. Interacts with GRB2 (via SH3 domain); this interaction mediates disassembly of DNM1 polymers, therefore modulates self-assembly. Forms a complex with BIN1 (via SH3 domain) and SH3GL2 (via SH3 domain). Forms a complex with SH3GL2 (via SH3 domain) and AMPH (via SH3 domain). Forms a complex with SH3GL2 (via SH3 domain) and SYNJ1. Interacts (via C-terminal proline-rich domain (PRD)) with SYT1; this interaction facilitates vesicle fission during clathrin-mediated endocytosis (CME). Interacts (via C-terminal proline-rich domain (PRD)) with PLCG1 (via SH3 domain); this interaction stimulates the release of GDP from DNM1 and enhances DNM1-dependent endocytosis. Interacts with SNPH; this interaction inhibits the binding of DNM1 to AMPH and DNM1-receptor-mediated endocytosis. Interacts with CAV1. Interacts with SH3GLB1 (via SH3 domain). Interacts with PACSIN1 (via SH3 domain), PACSIN2 (via SH3 domain) and PACSIN3 (via SH3 domain). Interacts with UNC119; this interaction decreases DNM1's GTPase activity and affects DNM1's interaction with AMPH. Interacts with AMPH. Interacts (GTP-bound form) with DNAJC6; this interaction allows clathrin-coated vesicle (CCV) formation at the plasma membrane. Post-translationally, phosphorylation at Ser-774 by GSK3B/GSK3-beta leads to inactivation of receptor-mediated endocytosis in non-neuronal cells. Dephosphorylation at Ser-774, through the EGFR downstream signaling, leads to activation and regulates early stages of clathrin-mediated endocytosis (CME). Phosphorylated on Tyr in response to EGF stimulation in cells expressing truncated EGFR. Phosphorylated by CDK5 leading to synaptic vesicle endocytosis (SVE) activation. Expressed exclusively in the brain.

Its subcellular location is the cell membrane. It localises to the membrane. It is found in the clathrin-coated pit. The protein localises to the cytoplasmic vesicle. The protein resides in the presynapse. Its subcellular location is the secretory vesicle. It localises to the chromaffin granule. It catalyses the reaction GTP + H2O = GDP + phosphate + H(+). Its function is as follows. Catalyzes the hydrolysis of GTP and utilizes this energy to mediate vesicle scission and participates in many forms of endocytosis, such as clathrin-mediated endocytosis or synaptic vesicle endocytosis as well as rapid endocytosis (RE). Associates to the membrane, through lipid binding, and self-assembles into rings and stacks of interconnected rings through oligomerization to form a helical polymer around the vesicle membrane leading to constriction of invaginated coated pits around their necks. Self-assembly of the helical polymer induces membrane tubules narrowing until the polymer reaches a length sufficient to trigger GTP hydrolysis. Depending on the curvature imposed on the tubules, membrane detachment from the helical polymer upon GTP hydrolysis can cause spontaneous hemifission followed by complete fission. May play a role in regulating early stages of clathrin-mediated endocytosis in non-neuronal cells through its activation by dephosphorylation via the signaling downstream of EGFR. Controls vesicle size at a step before fission, during formation of membrane pits, at hippocampal synapses. Controls plastic adaptation of the synaptic vesicle recycling machinery to high levels of activity. Mediates rapid endocytosis (RE), a Ca(2+)-dependent and clathrin- and K(+)-independent process in chromaffin cells. Microtubule-associated force-producing protein involved in producing microtubule bundles and able to bind and hydrolyze GTP. Through its interaction with DNAJC6, acts during the early steps of clathrin-coated vesicle (CCV) formation. The polypeptide is Dynamin-1 (Mus musculus (Mouse)).